Reading from the N-terminus, the 594-residue chain is Segmentation polarity homeobox protein engrailed (594 aa).

Disordered stretches follow at residues 1–64, 76–127, 141–164, 198–217, 231–299, 387–458, and 474–501; these read MALE…TRDE, IKQE…PASI, KATA…ISPG, HYYQ…PQRA, ISKS…PTGS, AGTG…GSEN, and DRPS…RPRT. The span at 22–60 shows a compositional bias: low complexity; it reads SQSPTSTTTVTMATASPVPACTTTTTTTSTSGASAASSP. The span at 92 to 112 shows a compositional bias: basic residues; it reads PHHHQHPHHHQLPHHPHHQHH. Over residues 151–164 the composition is skewed to pro residues; sequence HPQPPAIREPISPG. Polar residues predominate over residues 237–247; it reads LCSSNGSSSAT. 2 stretches are compositionally biased toward low complexity: residues 278–299 and 387–402; these read ASPS…PTGS and AGTG…ANGA. Polar residues-rich tracts occupy residues 426–436 and 448–458; these read SSETNGSSSQD and ETSSTKDGSEN. The span at 487-499 shows a compositional bias: basic and acidic residues; that stretch reads QPKEKGDSEEKRP. The homeobox DNA-binding region spans 496–555; sequence EKRPRTAFSNAQLQRLKNEFNENRYLTEKRRQTLSAELGLNEAQIKIWFQNKRAKIKKSS.

It belongs to the engrailed homeobox family.

Its subcellular location is the nucleus. Functionally, this protein specifies the body segmentation pattern. It is required for the development of the central nervous system. Transcriptional regulator that repress activated promoters. The protein is Segmentation polarity homeobox protein engrailed (en) of Anopheles gambiae (African malaria mosquito).